Consider the following 555-residue polypeptide: Bifunctional epoxide hydrolase 2 (555 aa).

The phosphatase stretch occupies residues 1-224; that stretch reads MALRAAVFDL…KVTGVQLLQT (224 aa). 2 residues coordinate Mg(2+): Asp-9 and Asp-11. Residue Lys-43 is modified to N6-acetyllysine. A phosphate-binding site is contributed by 123–124; sequence TN. Asp-185 is a Mg(2+) binding site. Residues Lys-191 and Lys-215 each carry the N6-acetyllysine modification. The segment at 235–555 is epoxide hydrolase; that stretch reads SALSHGYVLI…ARNPLVDSKL (321 aa). One can recognise an AB hydrolase-1 domain in the interval 259–531; the sequence is PAVCLCHGFP…CGHWTQIDKP (273 aa). Asp-335 acts as the Nucleophile in catalysis. Ser-370 carries the phosphoserine modification. A substrate-binding site is contributed by Tyr-383. Residue Lys-455 is modified to N6-succinyllysine. The Proton donor role is filled by Tyr-466. Lys-505 bears the N6-succinyllysine mark. A lipid anchor (S-(15-deoxy-Delta12,14-prostaglandin J2-9-yl)cysteine) is attached at Cys-522. The active-site Proton acceptor is His-524. The Microbody targeting signal signature appears at 553 to 555; the sequence is SKL. Position 554 is an N6-succinyllysine (Lys-554).

Belongs to the AB hydrolase superfamily. Epoxide hydrolase family. Homodimer. Mg(2+) serves as cofactor. Post-translationally, the covalent modification of cysteine by 15-deoxy-Delta12,14-prostaglandin-J2 is autocatalytic and reversible. It may occur as an alternative to other cysteine modifications, such as S-nitrosylation and S-palmitoylation.

It is found in the cytoplasm. It localises to the peroxisome. The enzyme catalyses an epoxide + H2O = an ethanediol. It catalyses the reaction (9S,10S)-10-hydroxy-9-(phosphooxy)octadecanoate + H2O = (9S,10S)-9,10-dihydroxyoctadecanoate + phosphate. The catalysed reaction is (14R,15S)-epoxy-(5Z,8Z,11Z)-eicosatrienoate + H2O = (14R,15R)-dihydroxy-(5Z,8Z,11Z)-eicosatrienoate. Its activity is regulated as follows. Inhibited by 1-(1-acetylpiperidin-4-yl)-3-(4-(trifl uoromethoxy)phenyl)urea (TPAU), 1-cyclohexyl-3-dodecylurea (CDU), 12-(3-adamantan-1-yl-ureido)-dodecanoic acid (AUDA), 1-((3S, 5S, 7S)-adamantan-1-yl)-3-(5-(2-(2-ethoxyethoxy) ethoxy)pentyl)urea (AEPU), N-adamantyl-N[']-cyclohexyl urea (ACU), 4-(((1S, 4S)-4-(3-((3S, 5S, 7S)-adamantan-1-yl) ureido)cyclohexyl)oxy)benzoic acid (c-AUCB), 4-(((1R, 4R)-4-(3-((3S, 5S, 7S)-adamantan-1-yl)ureido)cyclohexyl)oxy)benzoic acid (t-AUCB), 4-(((1R, 4R)-4-(3-(4(trifluoromethoxy)phenyl)ureido)cyclohexyl)oxy)benzoic acid (t-TAUCB) and to a lesser extent by 8-(3-((3S, 5S, 7S)-adamantan-1-yl)ureido) octanoic acid (AUOA). In terms of biological role, bifunctional enzyme. The C-terminal domain has epoxide hydrolase activity and acts on epoxides (alkene oxides, oxiranes) and arene oxides. Plays a role in xenobiotic metabolism by degrading potentially toxic epoxides. Also determines steady-state levels of physiological mediators. The N-terminal domain has lipid phosphatase activity, with the highest activity towards threo-9,10-phosphonooxy-hydroxy-octadecanoic acid, followed by erythro-9,10-phosphonooxy-hydroxy-octadecanoic acid, 12-phosphonooxy-octadec-9Z-enoic acid and 12-phosphonooxy-octadec-9E-enoic acid. The polypeptide is Bifunctional epoxide hydrolase 2 (EPHX2) (Sus scrofa (Pig)).